Here is an 80-residue protein sequence, read N- to C-terminus: Venom protein HGE029 (80 aa).

The signal sequence occupies residues 1–22; it reads MNAKAFLAIFMIALLITDRAEA.

The protein belongs to the non-disulfide-bridged peptide (NDBP) superfamily. Long chain multifunctional peptide (group 2) family. As to expression, expressed by the venom gland.

The protein localises to the secreted. The protein is Venom protein HGE029 of Hoffmannihadrurus gertschi (Scorpion).